Here is a 728-residue protein sequence, read N- to C-terminus: Homoaconitase, mitochondrial (728 aa).

The N-terminal 24 residues, 1–24, are a transit peptide targeting the mitochondrion; it reads MVAIPRLARLSVPAWALSARGRFY. The [4Fe-4S] cluster site is built by Cys362, Cys422, and Cys425.

The protein belongs to the aconitase/IPM isomerase family. It depends on [4Fe-4S] cluster as a cofactor.

It localises to the mitochondrion. It catalyses the reaction (2R,3S)-homoisocitrate = cis-homoaconitate + H2O. Its pathway is amino-acid biosynthesis; L-lysine biosynthesis via AAA pathway; L-alpha-aminoadipate from 2-oxoglutarate: step 3/5. Its function is as follows. Catalyzes the reversible hydration of cis-homoaconitate to (2R,3S)-homoisocitrate, a step in the alpha-aminoadipate pathway for lysine biosynthesis. This is Homoaconitase, mitochondrial (LYS4) from Cryptococcus neoformans var. neoformans serotype D (strain B-3501A) (Filobasidiella neoformans).